The sequence spans 406 residues: Probable UDP-arabinose 4-epimerase 3 (406 aa).

The Cytoplasmic segment spans residues 1–26 (MIPLNRRASQTRGGMEYFDARRKPHN). A helical; Signal-anchor for type II membrane protein transmembrane segment spans residues 27–44 (VGKVIAALVLTTLCIFIL). The Lumenal segment spans residues 45-406 (KQSPGFGGSS…KSHPRGYGSN (362 aa)). 65 to 96 (HVLVTGGAGYIGSHASLRLLKDNYRVTIVDNL) provides a ligand contact to NAD(+). The Proton acceptor role is filled by tyrosine 213.

This sequence belongs to the NAD(P)-dependent epimerase/dehydratase family. The cofactor is NAD(+).

The protein resides in the golgi apparatus. It localises to the golgi stack membrane. The catalysed reaction is UDP-beta-L-arabinopyranose = UDP-alpha-D-xylose. It participates in nucleotide-sugar biosynthesis; UDP-L-arabinose biosynthesis; UDP-L-arabinose from UDP-alpha-D-xylose: step 1/1. Its pathway is cell wall biogenesis; cell wall polysaccharide biosynthesis. This chain is Probable UDP-arabinose 4-epimerase 3 (UEL-3), found in Oryza sativa subsp. japonica (Rice).